The chain runs to 217 residues: Elongation factor Ts (217 aa).

Residues 82–85 are involved in Mg(2+) ion dislocation from EF-Tu; sequence TDFV.

It belongs to the EF-Ts family.

It is found in the cytoplasm. Functionally, associates with the EF-Tu.GDP complex and induces the exchange of GDP to GTP. It remains bound to the aminoacyl-tRNA.EF-Tu.GTP complex up to the GTP hydrolysis stage on the ribosome. This Desulfitobacterium hafniense (strain DSM 10664 / DCB-2) protein is Elongation factor Ts.